Reading from the N-terminus, the 137-residue chain is Large ribosomal subunit protein uL16 (137 aa).

Belongs to the universal ribosomal protein uL16 family. In terms of assembly, part of the 50S ribosomal subunit.

Functionally, binds 23S rRNA and is also seen to make contacts with the A and possibly P site tRNAs. The protein is Large ribosomal subunit protein uL16 of Legionella pneumophila (strain Paris).